Consider the following 132-residue polypeptide: Gamma-crystallin-5 (132 aa).

One can recognise a Beta/gamma crystallin 'Greek key' 2 domain in the interval 1–40; it reads ILYEQPSYRGHQYYLWKGEYPDFQRWMGFNDSIRSCRMSP. The connecting peptide stretch occupies residues 41-45; it reads YHQGQ. 2 Beta/gamma crystallin 'Greek key' domains span residues 46-86 and 87-129; these read YKMR…NVFD and GNWM…RRVH.

It belongs to the beta/gamma-crystallin family. In terms of assembly, monomer.

Functionally, crystallins are the dominant structural components of the vertebrate eye lens. The polypeptide is Gamma-crystallin-5 (cryg5) (Xenopus laevis (African clawed frog)).